The following is a 900-amino-acid chain: Protein translocase subunit SecA (900 aa).

ATP is bound by residues Q87, 105 to 109, and D512; that span reads GEGKT. Positions 849-900 are disordered; the sequence is ERLAQQQQFSHQEEDSLNTGSPAQADRKIGRNDPCPCGSGKKYKQCHGRLQK. Residues C883, C885, C894, and H895 each coordinate Zn(2+). A compositionally biased stretch (basic residues) spans 889-900; sequence KKYKQCHGRLQK.

The protein belongs to the SecA family. As to quaternary structure, monomer and homodimer. Part of the essential Sec protein translocation apparatus which comprises SecA, SecYEG and auxiliary proteins SecDF-YajC and YidC. It depends on Zn(2+) as a cofactor.

The protein resides in the cell inner membrane. Its subcellular location is the cytoplasm. The enzyme catalyses ATP + H2O + cellular proteinSide 1 = ADP + phosphate + cellular proteinSide 2.. Functionally, part of the Sec protein translocase complex. Interacts with the SecYEG preprotein conducting channel. Has a central role in coupling the hydrolysis of ATP to the transfer of proteins into and across the cell membrane, serving both as a receptor for the preprotein-SecB complex and as an ATP-driven molecular motor driving the stepwise translocation of polypeptide chains across the membrane. The sequence is that of Protein translocase subunit SecA from Pectobacterium atrosepticum (strain SCRI 1043 / ATCC BAA-672) (Erwinia carotovora subsp. atroseptica).